Reading from the N-terminus, the 721-residue chain is Polyribonucleotide nucleotidyltransferase (721 aa).

Aspartate 495 and aspartate 501 together coordinate Mg(2+). The 60-residue stretch at 562-621 (PRLLSFRIDPELIGTVIGPGGRTIKGITERTNTKIDIEDGGIVTIASHDGAAAEAAQRII) folds into the KH domain. An S1 motif domain is found at 631–699 (GEVFSGTITR…NRGRINLTLR (69 aa)). The segment at 700–721 (GVPQNGEETQSEPAPTPVAPLN) is disordered.

Belongs to the polyribonucleotide nucleotidyltransferase family. It depends on Mg(2+) as a cofactor.

It localises to the cytoplasm. The enzyme catalyses RNA(n+1) + phosphate = RNA(n) + a ribonucleoside 5'-diphosphate. In terms of biological role, involved in mRNA degradation. Catalyzes the phosphorolysis of single-stranded polyribonucleotides processively in the 3'- to 5'-direction. The sequence is that of Polyribonucleotide nucleotidyltransferase from Prochlorococcus marinus (strain MIT 9303).